Here is a 147-residue protein sequence, read N- to C-terminus: Large ribosomal subunit protein uL11 (147 aa).

It belongs to the universal ribosomal protein uL11 family. In terms of assembly, part of the ribosomal stalk of the 50S ribosomal subunit. Interacts with L10 and the large rRNA to form the base of the stalk. L10 forms an elongated spine to which L12 dimers bind in a sequential fashion forming a multimeric L10(L12)X complex. One or more lysine residues are methylated.

In terms of biological role, forms part of the ribosomal stalk which helps the ribosome interact with GTP-bound translation factors. This chain is Large ribosomal subunit protein uL11, found in Phocaeicola vulgatus (strain ATCC 8482 / DSM 1447 / JCM 5826 / CCUG 4940 / NBRC 14291 / NCTC 11154) (Bacteroides vulgatus).